The chain runs to 472 residues: NADH-quinone oxidoreductase subunit N (472 aa).

The next 14 membrane-spanning stretches (helical) occupy residues 11-31, 43-63, 67-87, 103-123, 125-145, 159-179, 200-220, 234-254, 265-285, 293-313, 318-338, 362-384, 401-421, and 446-466; these read AELS…FLPA, ILLT…LFGG, STPM…LVFL, GEFY…VSAG, FLLF…LVAF, FILS…MIYG, VLAL…VPFH, VSAY…MIIL, WSEI…LFAI, FMAF…LAGT, ASLV…FGVI, PKLT…FAGF, LIVF…LLIV, and LLVC…YQLL.

Belongs to the complex I subunit 2 family. In terms of assembly, NDH-1 is composed of 14 different subunits. Subunits NuoA, H, J, K, L, M, N constitute the membrane sector of the complex.

The protein localises to the cell inner membrane. The catalysed reaction is a quinone + NADH + 5 H(+)(in) = a quinol + NAD(+) + 4 H(+)(out). Its function is as follows. NDH-1 shuttles electrons from NADH, via FMN and iron-sulfur (Fe-S) centers, to quinones in the respiratory chain. The immediate electron acceptor for the enzyme in this species is believed to be a menaquinone. Couples the redox reaction to proton translocation (for every two electrons transferred, four hydrogen ions are translocated across the cytoplasmic membrane), and thus conserves the redox energy in a proton gradient. This chain is NADH-quinone oxidoreductase subunit N, found in Phocaeicola vulgatus (strain ATCC 8482 / DSM 1447 / JCM 5826 / CCUG 4940 / NBRC 14291 / NCTC 11154) (Bacteroides vulgatus).